The sequence spans 357 residues: Peptide chain release factor 1 (357 aa).

Position 232 is an N5-methylglutamine (Gln232).

Belongs to the prokaryotic/mitochondrial release factor family. Post-translationally, methylated by PrmC. Methylation increases the termination efficiency of RF1.

Its subcellular location is the cytoplasm. Peptide chain release factor 1 directs the termination of translation in response to the peptide chain termination codons UAG and UAA. In Maridesulfovibrio salexigens (strain ATCC 14822 / DSM 2638 / NCIMB 8403 / VKM B-1763) (Desulfovibrio salexigens), this protein is Peptide chain release factor 1.